A 66-amino-acid polypeptide reads, in one-letter code: Large ribosomal subunit protein bL35 (66 aa).

A compositionally biased stretch (basic residues) spans 1–26 (MPKMKTHRGAAKRVKRTASGKLKRSR). Residues 1–49 (MPKMKTHRGAAKRVKRTASGKLKRSRAFTSHLFANKSTKQKRKLRKASL) form a disordered region.

Belongs to the bacterial ribosomal protein bL35 family.

The polypeptide is Large ribosomal subunit protein bL35 (Staphylococcus carnosus (strain TM300)).